The chain runs to 461 residues: uncharacterized protein (461 aa).

Over residues 1–19 (MEKCSHESGRHSAENDGKY) the composition is skewed to basic and acidic residues. Residues 1 to 21 (MEKCSHESGRHSAENDGKYDI) are disordered.

The protein belongs to the CapA family.

Its function is as follows. Could be involved in the biosynthesis of a cell wall component. This is an uncharacterized protein from Sinorhizobium fredii (strain NBRC 101917 / NGR234).